The chain runs to 356 residues: NADH-quinone oxidoreductase subunit H (356 aa).

9 helical membrane-spanning segments follow: residues 16–36 (IAVL…AFLL), 52–72 (PNVV…KFVF), 85–105 (LYLL…AVVP), 117–137 (VGIL…IIGG), 163–183 (IGFI…SEII), 201–221 (WPMP…ISAL), 254–274 (FMVG…ILFF), 295–315 (AWYF…FAMV), and 334–354 (IFLP…VYGP).

This sequence belongs to the complex I subunit 1 family. NDH-1 is composed of 14 different subunits. Subunits NuoA, H, J, K, L, M, N constitute the membrane sector of the complex.

It is found in the cell inner membrane. The catalysed reaction is a quinone + NADH + 5 H(+)(in) = a quinol + NAD(+) + 4 H(+)(out). Functionally, NDH-1 shuttles electrons from NADH, via FMN and iron-sulfur (Fe-S) centers, to quinones in the respiratory chain. The immediate electron acceptor for the enzyme in this species is believed to be ubiquinone. Couples the redox reaction to proton translocation (for every two electrons transferred, four hydrogen ions are translocated across the cytoplasmic membrane), and thus conserves the redox energy in a proton gradient. This subunit may bind ubiquinone. The chain is NADH-quinone oxidoreductase subunit H from Maricaulis maris (strain MCS10) (Caulobacter maris).